A 219-amino-acid polypeptide reads, in one-letter code: Octanoyltransferase (219 aa).

One can recognise a BPL/LPL catalytic domain in the interval 31–219 (EDLPGFLVFC…KLKRRLLEVL (189 aa)). Substrate is bound by residues 69 to 76 (RGGRATYH), 153 to 155 (SVG), and 166 to 168 (GAA). The active-site Acyl-thioester intermediate is the Cys184.

It belongs to the LipB family.

The protein localises to the cytoplasm. It catalyses the reaction octanoyl-[ACP] + L-lysyl-[protein] = N(6)-octanoyl-L-lysyl-[protein] + holo-[ACP] + H(+). It functions in the pathway protein modification; protein lipoylation via endogenous pathway; protein N(6)-(lipoyl)lysine from octanoyl-[acyl-carrier-protein]: step 1/2. Its function is as follows. Catalyzes the transfer of endogenously produced octanoic acid from octanoyl-acyl-carrier-protein onto the lipoyl domains of lipoate-dependent enzymes. Lipoyl-ACP can also act as a substrate although octanoyl-ACP is likely to be the physiological substrate. The polypeptide is Octanoyltransferase (Bdellovibrio bacteriovorus (strain ATCC 15356 / DSM 50701 / NCIMB 9529 / HD100)).